The following is a 451-amino-acid chain: Multidrug export protein MepA (451 aa).

12 helical membrane-spanning segments follow: residues 26-46 (MIGT…IGFL), 54-74 (AISL…LFGV), 97-117 (SFSI…TLPF), 139-159 (LKVM…EQFA), 170-190 (IGML…IFGF), 194-214 (VVGA…FFII), 245-265 (IPAF…NLFL), 282-302 (LVQF…PLIA), 318-338 (AVIM…FTIG), 355-375 (ATFI…GFLF), 397-417 (AIII…GVIW), and 418-438 (SLLI…YLLR).

This sequence belongs to the multi antimicrobial extrusion (MATE) (TC 2.A.66.1) family. MepA subfamily.

It is found in the cell membrane. Functionally, multidrug resistance efflux protein. Contributes to resistance to the glycylcycline antibiotic tigecycline. This is Multidrug export protein MepA (mepA) from Staphylococcus aureus (strain N315).